We begin with the raw amino-acid sequence, 652 residues long: Oligopeptide-binding protein AliB (652 aa).

The signal sequence occupies residues 1 to 24 (MKKSKSKYLTLAGLVLGTGVLLSA). The N-palmitoyl cysteine moiety is linked to residue cysteine 25. Residue cysteine 25 is the site of S-diacylglycerol cysteine attachment.

This sequence belongs to the bacterial solute-binding protein 5 family.

It localises to the cell membrane. In terms of biological role, part of the binding-protein-dependent transport system for oligopeptides; probably an oligopeptide binding protein. The protein is Oligopeptide-binding protein AliB (aliB) of Streptococcus pneumoniae serotype 4 (strain ATCC BAA-334 / TIGR4).